We begin with the raw amino-acid sequence, 613 residues long: Chaperone protein DnaK (613 aa).

A disordered region spans residues 578–613 (MYQSQATQGTSQNSSQNNNSQNNNGDTVDADFKESK). Low complexity predominate over residues 580 to 602 (QSQATQGTSQNSSQNNNSQNNNG).

Belongs to the heat shock protein 70 family.

Acts as a chaperone. The protein is Chaperone protein DnaK of Picrophilus torridus (strain ATCC 700027 / DSM 9790 / JCM 10055 / NBRC 100828 / KAW 2/3).